Here is a 229-residue protein sequence, read N- to C-terminus: Large ribosomal subunit protein uL1 (229 aa).

The protein belongs to the universal ribosomal protein uL1 family. Part of the 50S ribosomal subunit.

Functionally, binds directly to 23S rRNA. The L1 stalk is quite mobile in the ribosome, and is involved in E site tRNA release. Protein L1 is also a translational repressor protein, it controls the translation of the L11 operon by binding to its mRNA. This chain is Large ribosomal subunit protein uL1, found in Enterococcus faecalis (strain ATCC 700802 / V583).